The following is a 366-amino-acid chain: Putative ankyrin repeat protein RBE_0601 (366 aa).

6 ANK repeats span residues 39–68 (KHGT…DINE), 94–124 (LPDE…DVNT), 131–160 (HGGA…IASQ), 162–186 (VISA…TAHD), 210–239 (KSSN…NPNA), and 250–280 (IALS…DTSK).

This is Putative ankyrin repeat protein RBE_0601 from Rickettsia bellii (strain RML369-C).